A 65-amino-acid polypeptide reads, in one-letter code: Potassium channel toxin kappa-KTx 2.7 (65 aa).

Residues Met1–Cys26 form the signal peptide. Residues Ser27–Glu39 constitute a propeptide that is removed on maturation. 2 cysteine pairs are disulfide-bonded: Cys45/Cys63 and Cys49/Cys59.

This sequence belongs to the short scorpion toxin superfamily. Potassium channel inhibitor kappa-KTx family. Kappa-KTx 2 subfamily. As to expression, expressed by the venom gland.

The protein localises to the secreted. Functionally, weakly inhibits the Kv7.1/KCNQ1 channel (10 uM of the toxin inhibits currents by 17.8%). This Heterometrus petersii (Asian forest scorpion) protein is Potassium channel toxin kappa-KTx 2.7.